A 209-amino-acid chain; its full sequence is Thymidine kinase (209 aa).

ATP contacts are provided by residues 16–23 and 90–93; these read GPMFAGKT and DEAQ. The active-site Proton acceptor is glutamate 91.

It belongs to the thymidine kinase family. In terms of assembly, homotetramer.

Its subcellular location is the cytoplasm. The enzyme catalyses thymidine + ATP = dTMP + ADP + H(+). The polypeptide is Thymidine kinase (Onion yellows phytoplasma (strain OY-M)).